Consider the following 715-residue polypeptide: ATP-dependent RecD2 DNA helicase (715 aa).

The tract at residues 1–150 is not required for helicase activity; sequence MSAALPAEPF…STLHKMVSSW (150 aa). Residues Q343 and 363–367 contribute to the ATP site; that span reads GTGKS. DNA-binding regions lie at residues G391 and 407-414; that span reads TVHRLLGY. Q466 provides a ligand contact to ATP. V470 is a DNA-binding region. R493 contacts ATP. DNA-binding regions lie at residues 554–555, 596–604, and 644–647; these read RK, NDYNNEIFN, and TVHR. Position 679 (R679) interacts with ATP.

The protein belongs to the RecD family. RecD2 subfamily. In terms of assembly, monomer; homodimers seem to be inactive.

It catalyses the reaction Couples ATP hydrolysis with the unwinding of duplex DNA at the replication fork by translocating in the 5'-3' direction. This creates two antiparallel DNA single strands (ssDNA). The leading ssDNA polymer is the template for DNA polymerase III holoenzyme which synthesizes a continuous strand.. The enzyme catalyses ATP + H2O = ADP + phosphate + H(+). DNA-dependent ATPase (ssDNA stimulates the ATPase better than dsDNA) and ATP-dependent 5'-3' DNA helicase. Plays a role in an antioxidant pathway. Involved in DNA damage repair and/or recombination. Appears to move along DNA in single base steps, powered by hydrolysis of 1 molecule of ATP. Has low processivity, unwinds about 15-20 base pairs/second. Short (20 bp) substrates with 5'-overhangs or forked ends are the best substrates, is much less efficient on 52 or 76 bp substrates with 5'-overhangs. The presence of single-stranded DNA-binding protein (SSB) increases unwinding 4-5 fold. Has no activity on blunt DNA or DNA with 3'-overhangs. Requires at least 10 bases of 5'-ssDNA for helicase activity. This is ATP-dependent RecD2 DNA helicase from Deinococcus radiodurans (strain ATCC 13939 / DSM 20539 / JCM 16871 / CCUG 27074 / LMG 4051 / NBRC 15346 / NCIMB 9279 / VKM B-1422 / R1).